The sequence spans 262 residues: Nurim (262 aa).

Residues M1–A4 are Nuclear-facing. A helical transmembrane segment spans residues L5–F28. Topologically, residues T29–S58 are perinuclear space. Residues I59 to M80 form a helical membrane-spanning segment. At A81–Q97 the chain is on the nuclear side. A helical transmembrane segment spans residues R98–R114. The Perinuclear space portion of the chain corresponds to Y115–W133. A helical membrane pass occupies residues A134–L164. The Nuclear segment spans residues M165–L191. Residues F192 to V210 traverse the membrane as a helical segment. Residues P211 to D216 are Perinuclear space-facing. A helical membrane pass occupies residues R217–L234. Residues D235–E262 lie on the Nuclear side of the membrane.

Belongs to the nurim family.

It localises to the nucleus inner membrane. The polypeptide is Nurim (NRM) (Pan troglodytes (Chimpanzee)).